The chain runs to 121 residues: Dihydroneopterin aldolase (121 aa).

The substrate site is built by glutamate 25 and methionine 114.

This sequence belongs to the archaeal dihydroneopterin aldolase family. In terms of assembly, homotetramer.

It catalyses the reaction 7,8-dihydroneopterin = 6-hydroxymethyl-7,8-dihydropterin + glycolaldehyde. Its pathway is cofactor biosynthesis; 5,6,7,8-tetrahydromethanopterin biosynthesis. Catalyzes the conversion of 7,8-dihydroneopterin (H2Neo) to 6-hydroxymethyl-7,8-dihydropterin (6-HMD). This is Dihydroneopterin aldolase from Methanocaldococcus jannaschii (strain ATCC 43067 / DSM 2661 / JAL-1 / JCM 10045 / NBRC 100440) (Methanococcus jannaschii).